A 95-amino-acid polypeptide reads, in one-letter code: Cobalt transport protein CbiN (95 aa).

2 helical membrane-spanning segments follow: residues 5–25 and 67–87; these read HILMLLAVIIISVAPLIIYSG and LLFALQAAIGALIIGYVFGYY.

Belongs to the CbiN family. Forms an energy-coupling factor (ECF) transporter complex composed of an ATP-binding protein (A component, CbiO), a transmembrane protein (T component, CbiQ) and 2 possible substrate-capture proteins (S components, CbiM and CbiN) of unknown stoichimetry.

It is found in the cell membrane. The protein operates within cofactor biosynthesis; adenosylcobalamin biosynthesis. Its function is as follows. Part of the energy-coupling factor (ECF) transporter complex CbiMNOQ involved in cobalt import. This Methanothermobacter thermautotrophicus (strain ATCC 29096 / DSM 1053 / JCM 10044 / NBRC 100330 / Delta H) (Methanobacterium thermoautotrophicum) protein is Cobalt transport protein CbiN.